Consider the following 123-residue polypeptide: Acidic phospholipase A2 (123 aa).

Intrachain disulfides connect Cys-26–Cys-116, Cys-28–Cys-44, Cys-43–Cys-95, Cys-49–Cys-123, Cys-50–Cys-88, Cys-57–Cys-81, and Cys-75–Cys-86. Ca(2+) is bound by residues Tyr-27, Gly-29, and Gly-31. The active site involves His-47. Ca(2+) is bound at residue Asp-48. Asp-89 is a catalytic residue.

Belongs to the phospholipase A2 family. Group II subfamily. D49 sub-subfamily. As to quaternary structure, homodimer. Ca(2+) is required as a cofactor. In terms of tissue distribution, expressed by the venom gland.

Its subcellular location is the secreted. The enzyme catalyses a 1,2-diacyl-sn-glycero-3-phosphocholine + H2O = a 1-acyl-sn-glycero-3-phosphocholine + a fatty acid + H(+). Functionally, snake venom phospholipase A2 (PLA2) that inhibits ADP-induced platelet aggregation. PLA2 catalyzes the calcium-dependent hydrolysis of the 2-acyl groups in 3-sn-phosphoglycerides. This is Acidic phospholipase A2 from Deinagkistrodon acutus (Hundred-pace snake).